Reading from the N-terminus, the 413-residue chain is Glucose-1-phosphate adenylyltransferase (413 aa).

Alpha-D-glucose 1-phosphate-binding positions include glycine 161, 176 to 177 (EK), and serine 195.

It belongs to the bacterial/plant glucose-1-phosphate adenylyltransferase family. Homotetramer.

The enzyme catalyses alpha-D-glucose 1-phosphate + ATP + H(+) = ADP-alpha-D-glucose + diphosphate. Its pathway is glycan biosynthesis; glycogen biosynthesis. Functionally, involved in the biosynthesis of ADP-glucose, a building block required for the elongation reactions to produce glycogen. Catalyzes the reaction between ATP and alpha-D-glucose 1-phosphate (G1P) to produce pyrophosphate and ADP-Glc. This chain is Glucose-1-phosphate adenylyltransferase, found in Anaeromyxobacter dehalogenans (strain 2CP-C).